A 301-amino-acid polypeptide reads, in one-letter code: Glycine--tRNA ligase alpha subunit (301 aa).

This sequence belongs to the class-II aminoacyl-tRNA synthetase family. As to quaternary structure, tetramer of two alpha and two beta subunits.

The protein localises to the cytoplasm. It carries out the reaction tRNA(Gly) + glycine + ATP = glycyl-tRNA(Gly) + AMP + diphosphate. The sequence is that of Glycine--tRNA ligase alpha subunit from Shewanella loihica (strain ATCC BAA-1088 / PV-4).